A 22-amino-acid chain; its full sequence is Protein YncP (22 aa).

The protein is Protein YncP of Escherichia coli (strain K12).